Consider the following 1703-residue polypeptide: Homeobox protein prospero (1703 aa).

11 disordered regions span residues Leu23–Gly292, Ser322–Ser357, Asn437–Leu521, Glu608–Asp692, Glu732–Lys751, Gln823–Asn844, Ser875–Ala951, Phe1040–Gly1101, Ser1197–Ala1217, Pro1245–Pro1389, and Ala1418–Leu1469. Residues Gln36–Gln53 are compositionally biased toward low complexity. The segment covering Ser66–Gly79 has biased composition (polar residues). The span at Thr92–Thr109 shows a compositional bias: low complexity. Over residues Asp110–Glu126 the composition is skewed to basic and acidic residues. Positions Glu127–Val136 are enriched in acidic residues. Low complexity-rich tracts occupy residues Val137–Ser188, Ser196–Lys255, Ala274–Gly292, Asn327–Ser337, and Ser346–Ser357. Positions Asn437–Asn452 are enriched in polar residues. The span at Ala453–Pro472 shows a compositional bias: low complexity. Phosphoserine occurs at positions 479, 482, 485, and 497. 2 stretches are compositionally biased toward polar residues: residues Ser503–Leu521 and Glu608–Gln617. The segment covering Ser618–Gly642 has biased composition (low complexity). 2 stretches are compositionally biased toward basic and acidic residues: residues Ser643–Gln658 and Ser674–Val691. Phosphoserine is present on residues Ser651 and Ser654. Acidic residues predominate over residues Ser875–Pro892. The span at Pro927 to Gly944 shows a compositional bias: low complexity. Positions Phe1040–Gln1054 are enriched in basic and acidic residues. The span at Gln1055–Gln1076 shows a compositional bias: low complexity. The span at Asn1208–Ala1217 shows a compositional bias: polar residues. A compositionally biased stretch (low complexity) spans Gln1252–Gln1278. The Nuclear localization signal signature appears at Pro1291–Val1298. The span at Pro1328–Gln1348 shows a compositional bias: low complexity. Positions Ala1349 to Ser1367 are enriched in polar residues. Pro residues predominate over residues Pro1374–Met1384. A compositionally biased stretch (basic residues) spans His1427–His1437. A compositionally biased stretch (low complexity) spans Gln1438–Gly1451. The Prospero-type homeo domain occupies Ser1545–Met1603. The segment at Ser1545–Glu1703 is homeo-Prospero. The Prospero domain maps to Glu1604–Glu1703.

This sequence belongs to the Prospero homeodomain family.

It localises to the nucleus. It is found in the cytoplasm. The protein localises to the cell cortex. In terms of biological role, homeodomain protein that controls neuronal identity. As a transcriptional factor, regulates the expression of ftz, eve and en in a subset of neuroblast progeny and modulates the transcriptional activity of other homeodomain proteins such as Dfd. Required for proper neuronal differentiation, axonal outgrowth and pathfinding of most or all neurons and their precursors in central and peripheral nervous systems. Regulates asymmetric stem cell self-renewal together with brat. This is Homeobox protein prospero (pros) from Drosophila melanogaster (Fruit fly).